An 83-amino-acid chain; its full sequence is Putative defensin-like protein 67 (83 aa).

Positions 1–24 (MGSSKLMVTCIVVAMLTISCDILS) are cleaved as a signal peptide. 4 disulfides stabilise this stretch: cysteine 38-cysteine 82, cysteine 42-cysteine 65, cysteine 51-cysteine 80, and cysteine 55-cysteine 81.

This sequence belongs to the DEFL family.

It is found in the secreted. The protein is Putative defensin-like protein 67 of Arabidopsis thaliana (Mouse-ear cress).